The sequence spans 62 residues: Photosystem II reaction center protein Z (62 aa).

Transmembrane regions (helical) follow at residues 8–28 (AVFALIATSSILLISVPVVFA) and 41–61 (FSGTSLWIGLVFLVGILNSLI).

The protein belongs to the PsbZ family. PSII is composed of 1 copy each of membrane proteins PsbA, PsbB, PsbC, PsbD, PsbE, PsbF, PsbH, PsbI, PsbJ, PsbK, PsbL, PsbM, PsbT, PsbY, PsbZ, Psb30/Ycf12, at least 3 peripheral proteins of the oxygen-evolving complex and a large number of cofactors. It forms dimeric complexes.

Its subcellular location is the plastid. It localises to the chloroplast thylakoid membrane. Its function is as follows. May control the interaction of photosystem II (PSII) cores with the light-harvesting antenna, regulates electron flow through the 2 photosystem reaction centers. PSII is a light-driven water plastoquinone oxidoreductase, using light energy to abstract electrons from H(2)O, generating a proton gradient subsequently used for ATP formation. This Vitis vinifera (Grape) protein is Photosystem II reaction center protein Z.